The following is a 313-amino-acid chain: Pyrimidine-specific ribonucleoside hydrolase RihB (313 aa).

Catalysis depends on Asp-11, which acts as the Proton acceptor. Residues Asp-11, Asp-16, and Val-124 each contribute to the Ca(2+) site. 2 residues coordinate substrate: Gln-227 and His-239. A Ca(2+)-binding site is contributed by Asp-240.

It belongs to the IUNH family. RihB subfamily. As to quaternary structure, homotetramer. Ca(2+) serves as cofactor.

The catalysed reaction is a pyrimidine ribonucleoside + H2O = a pyrimidine nucleobase + D-ribose. Functionally, hydrolyzes cytidine or uridine to ribose and cytosine or uracil, respectively. Has a clear preference for cytidine over uridine. Strictly specific for ribonucleosides. This Escherichia coli (strain SMS-3-5 / SECEC) protein is Pyrimidine-specific ribonucleoside hydrolase RihB.